The sequence spans 218 residues: MFYSAAVAALMVGSASAFLAPAQFNSVAKSSGALSMKLGSSAEGLIGSDLELPEFDPLGFTNNPAPGALEWYRAAELKHGRVAMLAALGQLVQSFYHLPDPVFSESAKPWQALVKVCNERPLAAVQIGLAIFACEAIGQANQAKPGQAAGDLGWDPLNLRGSNEEIFERAQLRELKNGRLAMIAITAMIVQENLTGYGVIEAYRENAINPFGDGKGFF.

The transit peptide at 1–36 (MFYSAAVAALMVGSASAFLAPAQFNSVAKSSGALSM) directs the protein to the chloroplast.

The protein belongs to the fucoxanthin chlorophyll protein family. The LHC complex of chromophytic algae is composed of fucoxanthin, chlorophyll A and C bound non-covalently by fucoxanthin chlorophyll proteins (FCPs). The ratio of pigments in this LHC is; fucoxanthin: chlorophyll C: chlorophyll A; (0.6-1): (0.1-0.3): (1).

The protein localises to the plastid. It localises to the chloroplast thylakoid membrane. In terms of biological role, the light-harvesting complex (LHC) functions as a light receptor, it captures and delivers excitation energy to photosystems with which it is closely associated. Energy is transferred from the carotenoid and chlorophyll C (or B) to chlorophyll A and the photosynthetic reaction centers where it is used to synthesize ATP and reducing power. The polypeptide is Fucoxanthin-chlorophyll a-c binding protein, chloroplastic (Chattonella marina var. antiqua (Red tide flagellate)).